A 535-amino-acid chain; its full sequence is Peptide chain release factor 3 (535 aa).

Positions 8–277 (KRRRTFAIIS…TLVDLAPPPG (270 aa)) constitute a tr-type G domain. GTP is bound by residues 17 to 24 (SHPDAGKT), 85 to 89 (DTPGH), and 139 to 142 (NKLD).

This sequence belongs to the TRAFAC class translation factor GTPase superfamily. Classic translation factor GTPase family. PrfC subfamily.

It localises to the cytoplasm. Functionally, increases the formation of ribosomal termination complexes and stimulates activities of RF-1 and RF-2. It binds guanine nucleotides and has strong preference for UGA stop codons. It may interact directly with the ribosome. The stimulation of RF-1 and RF-2 is significantly reduced by GTP and GDP, but not by GMP. This Nitrosomonas eutropha (strain DSM 101675 / C91 / Nm57) protein is Peptide chain release factor 3.